We begin with the raw amino-acid sequence, 238 residues long: Probable transcriptional regulatory protein YeeN (238 aa).

It belongs to the TACO1 family. YeeN subfamily.

The protein resides in the cytoplasm. The protein is Probable transcriptional regulatory protein YeeN of Shigella sonnei (strain Ss046).